We begin with the raw amino-acid sequence, 119 residues long: Acidic phospholipase A2 DE-III (119 aa).

7 disulfide bridges follow: Cys11–Cys72, Cys26–Cys118, Cys28–Cys44, Cys43–Cys99, Cys50–Cys92, Cys60–Cys85, and Cys79–Cys90. 3 residues coordinate Ca(2+): Tyr27, Gly29, and Gly31. His47 is a catalytic residue. Residue Asp48 participates in Ca(2+) binding. Asp93 is a catalytic residue.

Belongs to the phospholipase A2 family. Group I subfamily. D49 sub-subfamily. Requires Ca(2+) as cofactor. Expressed by the venom gland.

Its subcellular location is the secreted. It carries out the reaction a 1,2-diacyl-sn-glycero-3-phosphocholine + H2O = a 1-acyl-sn-glycero-3-phosphocholine + a fatty acid + H(+). Functionally, PLA2 catalyzes the calcium-dependent hydrolysis of the 2-acyl groups in 3-sn-phosphoglycerides. In Naja melanoleuca (Forest cobra), this protein is Acidic phospholipase A2 DE-III.